Here is a 341-residue protein sequence, read N- to C-terminus: D-aspartate oxidase (341 aa).

7 residues coordinate FAD: D36, K37, T43, S44, M50, G307, and I311. The short motif at 339-341 (SKL) is the Microbody targeting signal element.

It belongs to the DAMOX/DASOX family. As to quaternary structure, homotetramer. Interacts with PEX5; the interaction is direct and required for localization of DDO to the peroxisome. The cofactor is FAD. In terms of tissue distribution, expressed in epithelial cells of the renal proximal tubules (not detected in the glomeruli or renal distal tubules), liver, right atrium of heart, lung, chief cells of the gastric mucosa, choroid plexus, pia mater, brain stem, midbrain, pons, medulla oblongata, hypothalamus, hippocampus, cerebral cortex, cerebellum, ependyma, olfactory bulb and the pituitary, pineal, thyroid and adrenal glands (at protein level).

Its subcellular location is the peroxisome matrix. The protein resides in the cytoplasm. It localises to the cytosol. The enzyme catalyses D-aspartate + O2 + H2O = oxaloacetate + H2O2 + NH4(+). The catalysed reaction is D-glutamate + O2 + H2O = H2O2 + 2-oxoglutarate + NH4(+). In terms of biological role, selectively catalyzes the oxidative deamination of acidic amino acids. Suppresses the level of D-aspartate in the brain, an amino acid that can act as an agonist for glutamate receptors. Protects the organism from the toxicity of D-amino acids. May also function in the intestine. This chain is D-aspartate oxidase (DDO), found in Sus scrofa (Pig).